The sequence spans 664 residues: SPARC-like protein 1 (664 aa).

The first 16 residues, 1 to 16, serve as a signal peptide directing secretion; it reads MKTGLFFLCLLGTAAA. Residues 25 to 34 are O-glycosylated at one additional site; the sequence is SDHSKPTAET. The segment at 28-360 is disordered; the sequence is SKPTAETVAP…DGPRHSASDD (333 aa). Residues threonine 31 and threonine 40 are each glycosylated (O-linked (GalNAc...) threonine). A glycan (O-linked (GalNAc...) serine) is linked at serine 44. A compositionally biased stretch (basic and acidic residues) spans 62 to 84; the sequence is DDSHHKAEKSSVLKSKEESHEQS. Phosphoserine occurs at positions 76, 84, and 92. Residues 85-94 show a composition bias toward polar residues; it reads AEQGKSSSQE. Residues 96–105 show a composition bias toward basic and acidic residues; that stretch reads GLKDQEDSDG. O-linked (GalNAc...) threonine glycosylation occurs at threonine 116. The span at 120-136 shows a compositional bias: basic and acidic residues; it reads LDIKEDMSEPQEKKLSE. Positions 146-156 are enriched in polar residues; the sequence is SSFTDSNQQES. N-linked (GlcNAc...) asparagine glycosylation occurs at asparagine 169. Residues 170-180 show a composition bias toward basic residues; sequence YSHHQLNRSSK. Serine 171 is subject to Phosphoserine. 2 N-linked (GlcNAc...) asparagine glycosylation sites follow: asparagine 176 and asparagine 196. Positions 188–199 are enriched in polar residues; sequence QGNQEQDPNISN. A compositionally biased stretch (basic and acidic residues) spans 216-235; it reads DNQERKTELPREHANSKQEE. 2 stretches are compositionally biased toward acidic residues: residues 236 to 248 and 259 to 280; these read DNTQSDDILEESD and DEFDQGNQEQEDNSNAEMEEEN. Residue serine 272 is modified to Phosphoserine. N-linked (GlcNAc...) asparagine glycosylation occurs at asparagine 280. Positions 306 to 316 are enriched in basic and acidic residues; it reads SNHKETEEKTV. An O-linked (GalNAc...) threonine glycan is attached at threonine 331. Positions 339–349 are enriched in acidic residues; that stretch reads DDGDDDGDDGG. Phosphoserine is present on residues serine 358 and serine 365. The tract at residues 388-426 is disordered; sequence EKVHENENIGTTEPGEHQEAKKAENSSNEEETSSEGNMR. Threonine 398 carries O-linked (GalNAc...) threonine glycosylation. Residues 401–411 are compositionally biased toward basic and acidic residues; that stretch reads PGEHQEAKKAE. N-linked (GlcNAc...) asparagine glycosylation occurs at asparagine 412. Position 420 is a phosphoserine (serine 420). In terms of domain architecture, Follistatin-like spans 432–454; sequence SCMSFQCKRGHICKADQQGKPHC. 7 disulfide bridges follow: cysteine 433–cysteine 444, cysteine 438–cysteine 454, cysteine 456–cysteine 490, cysteine 462–cysteine 483, cysteine 472–cysteine 509, cysteine 515–cysteine 626, and cysteine 634–cysteine 650. Residues 450–511 form the Kazal-like domain; it reads GKPHCVCQDP…QLDYFGACKS (62 aa). Asparagine 476 is a glycosylation site (N-linked (GlcNAc...) asparagine). Residues 622-657 form the EF-hand domain; that stretch reads PMEHCITRFFEECDPNKDKHITLKEWGHCFGIKEED. Ca(2+)-binding residues include aspartate 635, asparagine 637, aspartate 639, histidine 641, and glutamate 646.

This sequence belongs to the SPARC family. Post-translationally, N- and O-glycosylated. O-glycosylated with a core 1 or possibly core 8 glycan. Highly expressed in lymph node, brain, heart, lung, skeletal muscle, ovary, small intestine, and colon, with lower levels in placenta, pancreas, testis, spleen, and thymus, and no expression in kidney, liver, and peripheral blood leukocytes.

It is found in the secreted. The protein resides in the extracellular space. Its subcellular location is the extracellular matrix. In Homo sapiens (Human), this protein is SPARC-like protein 1 (SPARCL1).